We begin with the raw amino-acid sequence, 76 residues long: Small ribosomal subunit protein bS18 (76 aa).

This sequence belongs to the bacterial ribosomal protein bS18 family. In terms of assembly, part of the 30S ribosomal subunit. Forms a tight heterodimer with protein bS6.

Binds as a heterodimer with protein bS6 to the central domain of the 16S rRNA, where it helps stabilize the platform of the 30S subunit. This chain is Small ribosomal subunit protein bS18, found in Pseudomonas fluorescens (strain ATCC BAA-477 / NRRL B-23932 / Pf-5).